A 430-amino-acid polypeptide reads, in one-letter code: MLDIQLLRGQLSQVAERLALRGVTLDSGAFTALEDERKQLQTRTQELQAKRNALSKQIGILKGKGEDASAVMAEVGQLGDELKACEQALPVVLEKLNAFLAGLPNLPQEGVPVGEDETGNVEVRRWGTPRSFDFEVKDHVDLGAALGLDFDTGAKLSGSRFTFMRGQIARLHRALAQFMLDTQTLEHGYTECYAPYIVNREVLVGTGQLPKFKEDMFWVLRGGDEEGGEQYLISTSEIPLTNTVREQILAADALPIKLTAHSPCFRSEAGSAGRDTRGMIRQHQFDKVEMVQIVHPDASNAALEEMVGHAEAILQKLELPYRVITLCTGDMGFSAAKTYDLEVWLPAQNTYREISSCSNCEAFQARRMQARFKTAQGKNELVHTLNGSGLAVGRTLVAVLENYQQADGSIVVPKALVPYMGGLEVLRPAS.

235 to 237 (TSE) is an L-serine binding site. ATP is bound at residue 266-268 (RSE). An L-serine-binding site is contributed by glutamate 289. 353–356 (EISS) provides a ligand contact to ATP. L-serine is bound at residue serine 388.

This sequence belongs to the class-II aminoacyl-tRNA synthetase family. Type-1 seryl-tRNA synthetase subfamily. As to quaternary structure, homodimer. The tRNA molecule binds across the dimer.

Its subcellular location is the cytoplasm. The enzyme catalyses tRNA(Ser) + L-serine + ATP = L-seryl-tRNA(Ser) + AMP + diphosphate + H(+). The catalysed reaction is tRNA(Sec) + L-serine + ATP = L-seryl-tRNA(Sec) + AMP + diphosphate + H(+). The protein operates within aminoacyl-tRNA biosynthesis; selenocysteinyl-tRNA(Sec) biosynthesis; L-seryl-tRNA(Sec) from L-serine and tRNA(Sec): step 1/1. Catalyzes the attachment of serine to tRNA(Ser). Is also able to aminoacylate tRNA(Sec) with serine, to form the misacylated tRNA L-seryl-tRNA(Sec), which will be further converted into selenocysteinyl-tRNA(Sec). The protein is Serine--tRNA ligase of Azoarcus sp. (strain BH72).